The chain runs to 187 residues: Lysozyme C-like protein DDB_G0288143 (187 aa).

A signal peptide spans 1–23 (MKVSNLISTITIASALCLSLTNA). Disulfide bonds link cysteine 50–cysteine 125, cysteine 74–cysteine 82, and cysteine 78–cysteine 97. Glutamate 55 is a catalytic residue. Positions 133 to 187 (QHGSHSSTSRDSSSSSSRDSTGTGYSSSGSGTSGSGSNSGQTGHFIPGQSGHGLN) are disordered. Over residues 136-175 (SHSSTSRDSSSSSSRDSTGTGYSSSGSGTSGSGSNSGQTG) the composition is skewed to low complexity.

The protein belongs to the glycosyl hydrolase 22 family.

The polypeptide is Lysozyme C-like protein DDB_G0288143 (Dictyostelium discoideum (Social amoeba)).